Here is a 466-residue protein sequence, read N- to C-terminus: Cysteine--tRNA ligase (466 aa).

Cys27 is a binding site for Zn(2+). A 'HIGH' region motif is present at residues Pro29–His39. Residues Cys208, His238, and Glu242 each contribute to the Zn(2+) site. The 'KMSKS' region signature appears at Lys270–Ser274. An ATP-binding site is contributed by Lys273.

It belongs to the class-I aminoacyl-tRNA synthetase family. As to quaternary structure, monomer. The cofactor is Zn(2+).

The protein localises to the cytoplasm. The catalysed reaction is tRNA(Cys) + L-cysteine + ATP = L-cysteinyl-tRNA(Cys) + AMP + diphosphate. This chain is Cysteine--tRNA ligase, found in Sulfurimonas denitrificans (strain ATCC 33889 / DSM 1251) (Thiomicrospira denitrificans (strain ATCC 33889 / DSM 1251)).